A 160-amino-acid chain; its full sequence is Cytochrome b6-f complex subunit 4 (160 aa).

Helical transmembrane passes span 36 to 56 (ILYM…GLAI), 95 to 115 (LLGI…PFIE), and 127 to 147 (PIAM…GAGA).

The protein belongs to the cytochrome b family. PetD subfamily. As to quaternary structure, the 4 large subunits of the cytochrome b6-f complex are cytochrome b6, subunit IV (17 kDa polypeptide, PetD), cytochrome f and the Rieske protein, while the 4 small subunits are PetG, PetL, PetM and PetN. The complex functions as a dimer.

It is found in the cellular thylakoid membrane. Its function is as follows. Component of the cytochrome b6-f complex, which mediates electron transfer between photosystem II (PSII) and photosystem I (PSI), cyclic electron flow around PSI, and state transitions. This Synechocystis sp. (strain ATCC 27184 / PCC 6803 / Kazusa) protein is Cytochrome b6-f complex subunit 4.